Consider the following 229-residue polypeptide: Triosephosphate isomerase (229 aa).

16 to 18 serves as a coordination point for substrate; sequence NFK. His100 functions as the Electrophile in the catalytic mechanism. The active-site Proton acceptor is Glu148. Substrate is bound by residues Ile153, Gly188, and 209–210; that span reads AS.

It belongs to the triosephosphate isomerase family. In terms of assembly, homotetramer; dimer of dimers.

The protein resides in the cytoplasm. It carries out the reaction D-glyceraldehyde 3-phosphate = dihydroxyacetone phosphate. Its pathway is carbohydrate biosynthesis; gluconeogenesis. It functions in the pathway carbohydrate degradation; glycolysis; D-glyceraldehyde 3-phosphate from glycerone phosphate: step 1/1. In terms of biological role, involved in the gluconeogenesis. Catalyzes stereospecifically the conversion of dihydroxyacetone phosphate (DHAP) to D-glyceraldehyde-3-phosphate (G3P). In Methanothermobacter thermautotrophicus (strain ATCC 29096 / DSM 1053 / JCM 10044 / NBRC 100330 / Delta H) (Methanobacterium thermoautotrophicum), this protein is Triosephosphate isomerase.